A 660-amino-acid polypeptide reads, in one-letter code: tRNA 5-methylaminomethyl-2-thiouridine biosynthesis bifunctional protein MnmC (660 aa).

The interval 1 to 242 (MTDRIVPATL…KRAMLVGEFA (242 aa)) is tRNA (mnm(5)s(2)U34)-methyltransferase. Positions 266–660 (IGAGLAGCAV…VRALRHGRVA (395 aa)) are FAD-dependent cmnm(5)s(2)U34 oxidoreductase.

The protein in the N-terminal section; belongs to the methyltransferase superfamily. tRNA (mnm(5)s(2)U34)-methyltransferase family. It in the C-terminal section; belongs to the DAO family. The cofactor is FAD.

It localises to the cytoplasm. The enzyme catalyses 5-aminomethyl-2-thiouridine(34) in tRNA + S-adenosyl-L-methionine = 5-methylaminomethyl-2-thiouridine(34) in tRNA + S-adenosyl-L-homocysteine + H(+). Catalyzes the last two steps in the biosynthesis of 5-methylaminomethyl-2-thiouridine (mnm(5)s(2)U) at the wobble position (U34) in tRNA. Catalyzes the FAD-dependent demodification of cmnm(5)s(2)U34 to nm(5)s(2)U34, followed by the transfer of a methyl group from S-adenosyl-L-methionine to nm(5)s(2)U34, to form mnm(5)s(2)U34. This is tRNA 5-methylaminomethyl-2-thiouridine biosynthesis bifunctional protein MnmC from Burkholderia pseudomallei (strain K96243).